Consider the following 62-residue polypeptide: Large ribosomal subunit protein bL28 (62 aa).

The segment at 1 to 26 (MARKCYVTGKSPKSGNNRSHALNKTK) is disordered. Polar residues predominate over residues 11 to 20 (SPKSGNNRSH).

The protein belongs to the bacterial ribosomal protein bL28 family.

This is Large ribosomal subunit protein bL28 from Exiguobacterium sibiricum (strain DSM 17290 / CCUG 55495 / CIP 109462 / JCM 13490 / 255-15).